Consider the following 2931-residue polypeptide: Probable polyketide synthase 9/36 (2931 aa).

In terms of domain architecture, Ketosynthase family 3 (KS3) spans 11 to 442 (EKGVAIVGIG…GSNCCLLISE (432 aa)). Active-site for beta-ketoacyl synthase activity residues include Cys181, His323, and His362. Residues 635–668 (GVNPSFILGHSLGEISASYCSGMIDLDTFCYTVY) are acyl/malonyl transferase. Ser645 (for acyl/malonyl transferase activity) is an active-site residue. The N-terminal hotdog fold stretch occupies residues 925–1047 (IDHLGTSNSY…ANFQLLDHGN (123 aa)). One can recognise a PKS/mFAS DH domain in the interval 925–1209 (IDHLGTSNSY…CKSLIPIKDS (285 aa)). Residue His959 is the Proton acceptor; for dehydratase activity of the active site. The tract at residues 1064 to 1209 (NLSKLTKNEL…CKSLIPIKDS (146 aa)) is C-terminal hotdog fold. The active-site Proton donor; for dehydratase activity is Asp1122. The chain crosses the membrane as a helical span at residues 2293–2313 (LINFVMASSAISLIGSTDLCT). Positions 2429–2506 (TGNKNIDELF…TSMKMILNSL (78 aa)) constitute a Carrier domain. Residue Ser2466 is modified to O-(pantetheine 4'-phosphoryl)serine. The helical transmembrane segment at 2553–2573 (KIILLTGTTGFLGGFLLFNMV) threads the bilayer.

Pantetheine 4'-phosphate serves as cofactor.

Its subcellular location is the membrane. In terms of biological role, probable polyketide synthase. In Dictyostelium discoideum (Social amoeba), this protein is Probable polyketide synthase 9/36 (pks9).